The primary structure comprises 162 residues: Disulfide bond formation protein B (162 aa).

The Cytoplasmic portion of the chain corresponds to 1–8 (MTPLFRKA). Residues 9–25 (VWLLFAVSVCAFAGSLA) traverse the membrane as a helical segment. Over 26–43 (AQYVLGMEPCVLCISQRL) the chain is Periplasmic. An intrachain disulfide couples C35 to C38. A helical membrane pass occupies residues 44-60 (CVLATALCTAIVLMCRP). Residues 61-67 (RRRAGGL) lie on the Cytoplasmic side of the membrane. A helical transmembrane segment spans residues 68–85 (FGAVFISIPAVTGISVAA). Topologically, residues 86–141 (YQLWLQSLPPGTAPSCGAPWTFRLKGWSLFDWFEPVVRGFGNCAEPDYLLGVALPV) are periplasmic. C101 and C128 are disulfide-bonded. The chain crosses the membrane as a helical span at residues 142-160 (WSAAYFLAVVLTVWWAWAR). At 161–162 (AK) the chain is on the cytoplasmic side.

This sequence belongs to the DsbB family.

The protein resides in the cell inner membrane. Functionally, required for disulfide bond formation in some periplasmic proteins. Acts by oxidizing the DsbA protein. In Neisseria meningitidis serogroup C / serotype 2a (strain ATCC 700532 / DSM 15464 / FAM18), this protein is Disulfide bond formation protein B.